Reading from the N-terminus, the 311-residue chain is MQRLDPWHGRCDLQFHATNGSTKHQGGCTAPFKLLRSERGEDGRCELPVLHTAGGLVGGDQLSLDFKLEANSRGLITSVAAQKVYGSIGRSRLQPEGCFAHQQVRCSLASGSDLEWLPQELVLYADALFEQQLTVTLPQDASFLSAEIVRLGRTAAGETLQQGRWRSSLTIQRLAGESSTWELADRVELGGASLESPHGLGGAPVFGTLVWAAPMAMGAETTASVLEGARADREGLTGTMRCGALNQGLIARYSGESSRDARFWFSRIWERTRTIRGLTRPRIPRVWPLQEQPLRRQTSTVNAFEAAAETH.

Belongs to the UreD family. As to quaternary structure, ureD, UreF and UreG form a complex that acts as a GTP-hydrolysis-dependent molecular chaperone, activating the urease apoprotein by helping to assemble the nickel containing metallocenter of UreC. The UreE protein probably delivers the nickel.

The protein localises to the cytoplasm. Its function is as follows. Required for maturation of urease via the functional incorporation of the urease nickel metallocenter. The polypeptide is Urease accessory protein UreD (Synechococcus sp. (strain CC9605)).